Here is a 268-residue protein sequence, read N- to C-terminus: Elongation factor Ts (268 aa).

The segment at 81–84 (TDFV) is involved in Mg(2+) ion dislocation from EF-Tu.

This sequence belongs to the EF-Ts family.

Its subcellular location is the cytoplasm. Its function is as follows. Associates with the EF-Tu.GDP complex and induces the exchange of GDP to GTP. It remains bound to the aminoacyl-tRNA.EF-Tu.GTP complex up to the GTP hydrolysis stage on the ribosome. This Buchnera aphidicola subsp. Acyrthosiphon pisum (strain 5A) protein is Elongation factor Ts.